Here is a 407-residue protein sequence, read N- to C-terminus: Formamidase (407 aa).

In terms of assembly, homotrimer.

The enzyme catalyses formamide + H2O = formate + NH4(+). In terms of biological role, hydrolyzes formamide with the production of ammonia which can be used as a source of nitrogen for growth. Also acts, more slowly, on acetamide, propanamide and butanamide. The polypeptide is Formamidase (fmdA) (Methylophilus methylotrophus (Bacterium W3A1)).